A 66-amino-acid chain; its full sequence is Dermaseptin PD-3-7 (66 aa).

The first 22 residues, 1–22 (MSFMKKSLLLVLFLGVVSLSNC), serve as a signal peptide directing secretion. Positions 23–40 (EEEKGENENEDHEEHHEE) are excised as a propeptide.

In terms of tissue distribution, expressed by the skin glands.

The protein localises to the secreted. Functionally, possesses a potent antimicrobial activity against Gram-positive and Gram-negative bacteria. Probably acts by disturbing membrane functions with its amphipathic structure. The sequence is that of Dermaseptin PD-3-7 from Agalychnis dacnicolor (Giant Mexican leaf frog).